A 114-amino-acid polypeptide reads, in one-letter code: MSDDVALPLQFTEAAAKKVKSLIADEDNPNLKLRVYITGGGCSGFQYGFTFDDQVNEGDMTIEKQGVGLVVDPMSLQYLVGGAVDYTEGLEGSRFVVTNPNAKSTCGCGSSFSI.

Residues Cys42, Cys106, and Cys108 each contribute to the iron-sulfur cluster site.

It belongs to the HesB/IscA family. As to quaternary structure, homodimer. Requires iron-sulfur cluster as cofactor.

Its function is as follows. Required for insertion of 4Fe-4S clusters for at least IspG. In Citrobacter koseri (strain ATCC BAA-895 / CDC 4225-83 / SGSC4696), this protein is Iron-sulfur cluster insertion protein ErpA.